Consider the following 506-residue polypeptide: Serine/threonine-protein kinase D6PKL1 (506 aa).

Residues M1–K96 are disordered. The segment covering E12–P23 has biased composition (basic and acidic residues). Residues E24 to K54 show a composition bias toward polar residues. Positions T55 to Q67 are enriched in basic and acidic residues. Positions S77 to S92 are enriched in low complexity. The Protein kinase domain maps to F123–F456. Residues L129–V137 and K152 each bind ATP. D248 acts as the Proton acceptor in catalysis. The tract at residues P475 to S495 is disordered. Residues S480–S492 show a composition bias toward low complexity.

This sequence belongs to the protein kinase superfamily. AGC Ser/Thr protein kinase family.

It is found in the cell membrane. It carries out the reaction L-seryl-[protein] + ATP = O-phospho-L-seryl-[protein] + ADP + H(+). It catalyses the reaction L-threonyl-[protein] + ATP = O-phospho-L-threonyl-[protein] + ADP + H(+). Functionally, protein kinase that regulates the auxin transport activity of PIN auxin efflux facilitators by direct phosphorylation. D6PK-mediated PIN phosphorylation promotes auxin transport in the hypocotyl and this is a prerequisite for PHOT1-dependent hypocotyl bending. The chain is Serine/threonine-protein kinase D6PKL1 (D6PKL1) from Arabidopsis thaliana (Mouse-ear cress).